A 232-amino-acid polypeptide reads, in one-letter code: Large ribosomal subunit protein uL1 (232 aa).

This sequence belongs to the universal ribosomal protein uL1 family. In terms of assembly, part of the 50S ribosomal subunit.

Its function is as follows. Binds directly to 23S rRNA. The L1 stalk is quite mobile in the ribosome, and is involved in E site tRNA release. Functionally, protein L1 is also a translational repressor protein, it controls the translation of the L11 operon by binding to its mRNA. This chain is Large ribosomal subunit protein uL1, found in Cereibacter sphaeroides (strain ATCC 17029 / ATH 2.4.9) (Rhodobacter sphaeroides).